Here is a 251-residue protein sequence, read N- to C-terminus: Protection of telomeres homolog 2 (251 aa).

Positions 221-251 are disordered; that stretch reads ELDNWPEGPPKTFAEAIARANNSRRPRDPPQ.

The protein belongs to the telombin family.

The protein resides in the nucleus. It is found in the chromosome. It localises to the telomere. Its function is as follows. Telomeric DNA-binding protein, which binds to two or more single-stranded G-rich repeat sequences (G-strand), with high specificity to the 5'-TTAGGC-3' sequence. In addition, repeat sequence binding requires a 3' single-stranded telomeric overhang. Acts redundantly with pot-1 to negatively regulate telomerase-mediated telomere extension. Also regulates telomere length by the telomerase-independent telomere maintenance pathway called ALT (alternative lengthening of telomeres). Does not appear to have a role in anchoring telomeres to the nuclear envelope. This chain is Protection of telomeres homolog 2, found in Caenorhabditis elegans.